Consider the following 310-residue polypeptide: Ribosomal protein uL3 glutamine methyltransferase (310 aa).

Belongs to the protein N5-glutamine methyltransferase family. PrmB subfamily.

The catalysed reaction is L-glutaminyl-[ribosomal protein uL3] + S-adenosyl-L-methionine = N(5)-methyl-L-glutaminyl-[ribosomal protein uL3] + S-adenosyl-L-homocysteine + H(+). In terms of biological role, specifically methylates large ribosomal subunit protein uL3 on 'Gln-150'. This is Ribosomal protein uL3 glutamine methyltransferase from Shigella dysenteriae serotype 1 (strain Sd197).